A 71-amino-acid chain; its full sequence is uncharacterized protein (71 aa).

This is an uncharacterized protein from Vaccinia virus (strain Western Reserve) (VACV).